The primary structure comprises 119 residues: uncharacterized protein (119 aa).

Residues 1–29 (MKKVGEEEIKQEENEKEKIVKKLNESDVK) adopt a coiled-coil conformation.

This is an uncharacterized protein from Acidianus sp. F28 (AFV-2).